A 56-amino-acid polypeptide reads, in one-letter code: Large ribosomal subunit protein bL32 (56 aa).

The tract at residues 1–26 (MAVQQNKKSRSKRGMRRSHDALSTAQ) is disordered. Over residues 7-16 (KKSRSKRGMR) the composition is skewed to basic residues.

The protein belongs to the bacterial ribosomal protein bL32 family.

This is Large ribosomal subunit protein bL32 from Shewanella amazonensis (strain ATCC BAA-1098 / SB2B).